The primary structure comprises 236 residues: Uridylate kinase (236 aa).

An ATP-binding site is contributed by 11 to 14; sequence KFSG. Position 53 (Gly-53) interacts with UMP. Residues Gly-54 and Arg-58 each contribute to the ATP site. UMP-binding positions include Asp-73 and 134–141; that span reads TGSPFFTT. 3 residues coordinate ATP: Thr-161, Tyr-167, and Asp-170.

This sequence belongs to the UMP kinase family. In terms of assembly, homohexamer.

It localises to the cytoplasm. The catalysed reaction is UMP + ATP = UDP + ADP. It participates in pyrimidine metabolism; CTP biosynthesis via de novo pathway; UDP from UMP (UMPK route): step 1/1. With respect to regulation, inhibited by UTP. Functionally, catalyzes the reversible phosphorylation of UMP to UDP. This chain is Uridylate kinase, found in Hydrogenovibrio crunogenus (strain DSM 25203 / XCL-2) (Thiomicrospira crunogena).